The sequence spans 565 residues: Probable beta-glucosidase btgE (565 aa).

Residues 1 to 18 (MRGAILATAAALAGTAMA) form the signal peptide. Residues 246–304 (TGQDEPTSAPAAPSTTAVPATTTAAPETTTAAPDTTTAVPSTSSAAPSSSSTAPASTGA) form a disordered region. Over residues 251 to 304 (PTSAPAAPSTTAVPATTTAAPETTTAAPDTTTAVPSTSSAAPSSSSTAPASTGA) the composition is skewed to low complexity. The active-site Proton donor is Glu-405. The active-site Nucleophile is the Glu-501.

Belongs to the glycosyl hydrolase 17 family.

It localises to the secreted. The protein localises to the cell wall. The catalysed reaction is Hydrolysis of terminal, non-reducing beta-D-glucosyl residues with release of beta-D-glucose.. It participates in glycan metabolism; cellulose degradation. Its function is as follows. Beta-glucosidases are one of a number of cellulolytic enzymes involved in the degradation of cellulosic biomass. Catalyzes the last step releasing glucose from the inhibitory cellobiose. The chain is Probable beta-glucosidase btgE (btgE) from Aspergillus fumigatus (strain CBS 144.89 / FGSC A1163 / CEA10) (Neosartorya fumigata).